We begin with the raw amino-acid sequence, 266 residues long: 3-methyl-2-oxobutanoate hydroxymethyltransferase (266 aa).

Mg(2+)-binding residues include D43 and D82. Residues 43–44, D82, and K110 each bind 3-methyl-2-oxobutanoate; that span reads DS. E112 contacts Mg(2+). E179 acts as the Proton acceptor in catalysis.

This sequence belongs to the PanB family. Homodecamer; pentamer of dimers. It depends on Mg(2+) as a cofactor.

It is found in the cytoplasm. The catalysed reaction is 3-methyl-2-oxobutanoate + (6R)-5,10-methylene-5,6,7,8-tetrahydrofolate + H2O = 2-dehydropantoate + (6S)-5,6,7,8-tetrahydrofolate. Its pathway is cofactor biosynthesis; (R)-pantothenate biosynthesis; (R)-pantoate from 3-methyl-2-oxobutanoate: step 1/2. Catalyzes the reversible reaction in which hydroxymethyl group from 5,10-methylenetetrahydrofolate is transferred onto alpha-ketoisovalerate to form ketopantoate. In Psychrobacter arcticus (strain DSM 17307 / VKM B-2377 / 273-4), this protein is 3-methyl-2-oxobutanoate hydroxymethyltransferase.